Here is a 474-residue protein sequence, read N- to C-terminus: Cryptochrome DASH (474 aa).

The 135-residue stretch at 2–136 (DTAVVWFRDD…ALRQRWTHTL (135 aa)) folds into the Photolyase/cryptochrome alpha/beta domain. The segment covering 161–171 (EAAATVRDPRS) has biased composition (basic and acidic residues). Residues 161-202 (EAAATVRDPRSAPETVPTPDGLTPGPVPTVESLGVSEPPTDD) form a disordered region.

It belongs to the DNA photolyase class-1 family. It depends on FAD as a cofactor. Requires (6R)-5,10-methylene-5,6,7,8-tetrahydrofolate as cofactor.

May have a photoreceptor function. Binds DNA; probably functions as a transcriptional repressor. The polypeptide is Cryptochrome DASH (cry) (Natronomonas pharaonis (strain ATCC 35678 / DSM 2160 / CIP 103997 / JCM 8858 / NBRC 14720 / NCIMB 2260 / Gabara) (Halobacterium pharaonis)).